Here is a 372-residue protein sequence, read N- to C-terminus: Tyrosine--tRNA ligase (372 aa).

L-tyrosine is bound by residues Tyr37, Tyr169, Gln173, Asp176, and Gln191. The short motif at 246–250 (KMSKS) is the 'KMSKS' region element. Lys249 provides a ligand contact to ATP.

This sequence belongs to the class-I aminoacyl-tRNA synthetase family. TyrS type 4 subfamily. As to quaternary structure, homodimer.

The protein resides in the cytoplasm. It carries out the reaction tRNA(Tyr) + L-tyrosine + ATP = L-tyrosyl-tRNA(Tyr) + AMP + diphosphate + H(+). Its function is as follows. Catalyzes the attachment of tyrosine to tRNA(Tyr) in a two-step reaction: tyrosine is first activated by ATP to form Tyr-AMP and then transferred to the acceptor end of tRNA(Tyr). The polypeptide is Tyrosine--tRNA ligase (Pyrobaculum calidifontis (strain DSM 21063 / JCM 11548 / VA1)).